The following is a 555-amino-acid chain: 2-succinyl-5-enolpyruvyl-6-hydroxy-3-cyclohexene-1-carboxylate synthase (555 aa).

Belongs to the TPP enzyme family. MenD subfamily. As to quaternary structure, homodimer. Mg(2+) serves as cofactor. Mn(2+) is required as a cofactor. The cofactor is thiamine diphosphate.

The enzyme catalyses isochorismate + 2-oxoglutarate + H(+) = 5-enolpyruvoyl-6-hydroxy-2-succinyl-cyclohex-3-ene-1-carboxylate + CO2. It functions in the pathway quinol/quinone metabolism; 1,4-dihydroxy-2-naphthoate biosynthesis; 1,4-dihydroxy-2-naphthoate from chorismate: step 2/7. It participates in quinol/quinone metabolism; menaquinone biosynthesis. In terms of biological role, catalyzes the thiamine diphosphate-dependent decarboxylation of 2-oxoglutarate and the subsequent addition of the resulting succinic semialdehyde-thiamine pyrophosphate anion to isochorismate to yield 2-succinyl-5-enolpyruvyl-6-hydroxy-3-cyclohexene-1-carboxylate (SEPHCHC). In Bacteroides fragilis (strain ATCC 25285 / DSM 2151 / CCUG 4856 / JCM 11019 / LMG 10263 / NCTC 9343 / Onslow / VPI 2553 / EN-2), this protein is 2-succinyl-5-enolpyruvyl-6-hydroxy-3-cyclohexene-1-carboxylate synthase.